We begin with the raw amino-acid sequence, 984 residues long: UPF0592 protein YDL073W (984 aa).

Positions 675 to 712 (KNHKIMDGYEGGQENEDNDEDSEDSGSHKNKRKEGNSS) are disordered. The span at 687 to 698 (QENEDNDEDSED) shows a compositional bias: acidic residues.

Belongs to the UPF0592 family.

This chain is UPF0592 protein YDL073W, found in Saccharomyces cerevisiae (strain ATCC 204508 / S288c) (Baker's yeast).